The following is a 301-amino-acid chain: Cilia- and flagella-associated protein 161 (301 aa).

The tract at residues 269–301 (GNPRDASSSMLDLPKPPTEDTRAMEQAMGLDTQ) is disordered.

In terms of assembly, microtubule inner protein component of sperm flagellar doublet microtubules. In terms of tissue distribution, expressed in airway epithelial cells.

The protein resides in the cytoplasm. It localises to the cytoskeleton. It is found in the cilium axoneme. Its subcellular location is the flagellum axoneme. In terms of biological role, microtubule inner protein (MIP) part of the dynein-decorated doublet microtubules (DMTs) in cilia axoneme, which is required for motile cilia beating. The protein is Cilia- and flagella-associated protein 161 of Homo sapiens (Human).